The following is a 440-amino-acid chain: Protein translocase subunit SecY (440 aa).

Helical transmembrane passes span 17 to 37 (IFFTIAMIVLYRIGAQIPSPG), 74 to 94 (IFAIGIMPYITASIIVQLLTV), 116 to 135 (YTRYLTVALALLQSSGIVAL), 155 to 175 (FFDLIVLVITMTAGAVLVMWM), 178 to 198 (LITEKGVGNGMSLLIFAGIAT), 213 to 233 (GVVFAVVLASVLILVIGVVFV), 270 to 290 (VIPVIFASSLIYMPVLITQIV), 316 to 336 (WQYIVLYFALTIFFSYFYVSV), 374 to 394 (LLFVGSLYLAVIAVLPNIMLD), and 403 to 423 (GATPFGGTAILILVSVALTTV).

Belongs to the SecY/SEC61-alpha family. In terms of assembly, component of the Sec protein translocase complex. Heterotrimer consisting of SecY, SecE and SecG subunits. The heterotrimers can form oligomers, although 1 heterotrimer is thought to be able to translocate proteins. Interacts with the ribosome. Interacts with SecDF, and other proteins may be involved. Interacts with SecA.

It is found in the cell membrane. Functionally, the central subunit of the protein translocation channel SecYEG. Consists of two halves formed by TMs 1-5 and 6-10. These two domains form a lateral gate at the front which open onto the bilayer between TMs 2 and 7, and are clamped together by SecE at the back. The channel is closed by both a pore ring composed of hydrophobic SecY resides and a short helix (helix 2A) on the extracellular side of the membrane which forms a plug. The plug probably moves laterally to allow the channel to open. The ring and the pore may move independently. The chain is Protein translocase subunit SecY from Corynebacterium glutamicum (strain ATCC 13032 / DSM 20300 / JCM 1318 / BCRC 11384 / CCUG 27702 / LMG 3730 / NBRC 12168 / NCIMB 10025 / NRRL B-2784 / 534).